The primary structure comprises 78 residues: MPQQRKGGRRRRKVDLIAANHIDYVDYKDVDLLKHFISERGKILPRSVTGTSAKNQRKVANAIKRARIMGLLPFVAED.

This sequence belongs to the bacterial ribosomal protein bS18 family. As to quaternary structure, part of the 30S ribosomal subunit. Forms a tight heterodimer with protein bS6.

Binds as a heterodimer with protein bS6 to the central domain of the 16S rRNA, where it helps stabilize the platform of the 30S subunit. In Lactobacillus delbrueckii subsp. bulgaricus (strain ATCC 11842 / DSM 20081 / BCRC 10696 / JCM 1002 / NBRC 13953 / NCIMB 11778 / NCTC 12712 / WDCM 00102 / Lb 14), this protein is Small ribosomal subunit protein bS18.